The chain runs to 192 residues: Protein hunchback (192 aa).

Disordered stretches follow at residues 16-54 (SHHHHHHHAHHSHHADSNSNASSPHQSPLPSPNPPSNTN) and 152-192 (LTPP…KYMA). Residues 17-28 (HHHHHHHAHHSH) are compositionally biased toward basic residues. A compositionally biased stretch (low complexity) spans 32–41 (SNSNASSPHQ). Residues 173 to 192 (EPEKEHDLMSNSSEDMKYMA) show a composition bias toward basic and acidic residues.

The protein belongs to the hunchback C2H2-type zinc-finger protein family.

Its subcellular location is the nucleus. In terms of biological role, gap class segmentation protein that controls development of head structures. The polypeptide is Protein hunchback (hb) (Drosophila tanythrix (Fruit fly)).